The primary structure comprises 770 residues: Glutamate carboxypeptidase 2 homolog (770 aa).

Residues 1–19 (MPYVGVGAQKASTNLTGGP) lie on the Cytoplasmic side of the membrane. A helical; Signal-anchor for type II membrane protein transmembrane segment spans residues 20–40 (MMKAYAFVLAFFLLGLGVLAL). Topologically, residues 41 to 770 (GKHHSGRRFN…CVVNTLRDVI (730 aa)) are extracellular. Residues Asn175 and Asn337 are each glycosylated (N-linked (GlcNAc...) asparagine). The segment at 282-597 (SKKELFKGRT…QYWAELAKTF (316 aa)) is catalytic. Residues His387 and Asp397 each contribute to the Zn(2+) site. Asn417 is a glycosylation site (N-linked (GlcNAc...) asparagine). Glu435 (nucleophile) is an active-site residue. Zn(2+) contacts are provided by Glu436 and Asp464. Residues Asn469 and Asn551 are each glycosylated (N-linked (GlcNAc...) asparagine). Position 562 (His562) interacts with Zn(2+). Asn606 and Asn630 each carry an N-linked (GlcNAc...) asparagine glycan.

Belongs to the peptidase M28 family. M28B subfamily. Zn(2+) is required as a cofactor.

The protein resides in the membrane. The catalysed reaction is Release of an unsubstituted, C-terminal glutamyl residue, typically from Ac-Asp-Glu or folylpoly-gamma-glutamates.. This is Glutamate carboxypeptidase 2 homolog from Caenorhabditis briggsae.